A 270-amino-acid polypeptide reads, in one-letter code: Undecaprenyl-diphosphatase 1 (270 aa).

7 consecutive transmembrane segments (helical) span residues 5 to 25, 42 to 62, 89 to 109, 117 to 137, 192 to 212, 220 to 240, and 250 to 270; these read YYIL…PIPI, IEGF…VLLI, FFFI…GVLF, LKGV…LWII, FSFL…ITDI, TLFV…YISL, and GNLK…LIFL.

The protein belongs to the UppP family.

Its subcellular location is the cell membrane. The catalysed reaction is di-trans,octa-cis-undecaprenyl diphosphate + H2O = di-trans,octa-cis-undecaprenyl phosphate + phosphate + H(+). Functionally, catalyzes the dephosphorylation of undecaprenyl diphosphate (UPP). Confers resistance to bacitracin. This Bacillus cereus (strain ATCC 10987 / NRS 248) protein is Undecaprenyl-diphosphatase 1.